A 779-amino-acid chain; its full sequence is Lon protease (779 aa).

The Lon N-terminal domain occupies 10–203; sequence LPLLPLRGLL…ILLTILNNER (194 aa). 355–362 contributes to the ATP binding site; it reads GPPGVGKT. In terms of domain architecture, Lon proteolytic spans 591–772; sequence KDQVGSVTGL…DEVLRHALTK (182 aa). Catalysis depends on residues Ser678 and Lys721.

Belongs to the peptidase S16 family. As to quaternary structure, homohexamer. Organized in a ring with a central cavity.

It is found in the cytoplasm. It catalyses the reaction Hydrolysis of proteins in presence of ATP.. Its function is as follows. ATP-dependent serine protease that mediates the selective degradation of mutant and abnormal proteins as well as certain short-lived regulatory proteins. Required for cellular homeostasis and for survival from DNA damage and developmental changes induced by stress. Degrades polypeptides processively to yield small peptide fragments that are 5 to 10 amino acids long. Binds to DNA in a double-stranded, site-specific manner. The sequence is that of Lon protease from Brevibacillus choshinensis.